The following is a 190-amino-acid chain: Peptidyl-prolyl cis-trans isomerase A (190 aa).

The N-terminal stretch at 1–23 (MSKRILAAVVTVLSLTAFSPAFA) is a signal peptide. The region spanning 26–187 (TSTHVLLTTS…KPIVIQSAKI (162 aa)) is the PPIase cyclophilin-type domain.

The protein belongs to the cyclophilin-type PPIase family.

It localises to the periplasm. It catalyses the reaction [protein]-peptidylproline (omega=180) = [protein]-peptidylproline (omega=0). Functionally, PPIases accelerate the folding of proteins. It catalyzes the cis-trans isomerization of proline imidic peptide bonds in oligopeptides. This is Peptidyl-prolyl cis-trans isomerase A (rotA) from Dickeya dadantii (strain 3937) (Erwinia chrysanthemi (strain 3937)).